The sequence spans 216 residues: MLGIGAFKQRMPRPGEALPGREQALPLHNTHLVNGHPLRGEFTGLAQVQFGLGCFWGAERKFWNVPGVYTTAVGYAGGQTPNATYSEVCSGQTGHTEAVLVVFDEQAVSFAQLLRTFWESHDPTQGMQQGNDVGTQYRSAIYCTTQAQYDAALASRDAYQQQLTASGYGDITTEIRFPAPTFYYAEDDHQQYLAKHPNGYCGLGGTGVSCPIGLDA.

Cysteine 54 is a catalytic residue.

This sequence belongs to the MsrA Met sulfoxide reductase family.

The catalysed reaction is L-methionyl-[protein] + [thioredoxin]-disulfide + H2O = L-methionyl-(S)-S-oxide-[protein] + [thioredoxin]-dithiol. The enzyme catalyses [thioredoxin]-disulfide + L-methionine + H2O = L-methionine (S)-S-oxide + [thioredoxin]-dithiol. Functionally, has an important function as a repair enzyme for proteins that have been inactivated by oxidation. Catalyzes the reversible oxidation-reduction of methionine sulfoxide in proteins to methionine. This is Peptide methionine sulfoxide reductase MsrA from Xanthomonas campestris pv. phaseoli.